A 1381-amino-acid chain; its full sequence is Peroxisomal ATPase PEX6 (1381 aa).

The span at Met1–Ser10 shows a compositional bias: polar residues. 4 disordered regions span residues Met1–Pro23, Val247–Ser315, Thr333–Arg374, and Tyr467–Ala499. Over residues Ser11–Gln20 the composition is skewed to basic residues. 2 stretches are compositionally biased toward acidic residues: residues Ala270–Asp284 and Thr296–Ser315. Polar residues-rich tracts occupy residues Thr333–Pro345, Gly355–Thr367, and Phe487–Ala499. Gly1031–Thr1038 lines the ATP pocket. Composition is skewed to basic and acidic residues over residues Gly1294–Ala1305 and Ser1337–Asp1350. Residues Gly1294–Asp1381 form a disordered region. Residues Gly1372 to Asp1381 show a composition bias toward acidic residues.

It belongs to the AAA ATPase family. Interacts with PEX1; forming the PEX1-PEX6 AAA ATPase complex, which is composed of a heterohexamer formed by a trimer of PEX1-PEX6 dimers.

It localises to the cytoplasm. The protein resides in the cytosol. It is found in the peroxisome membrane. The enzyme catalyses ATP + H2O = ADP + phosphate + H(+). In terms of biological role, component of the PEX1-PEX6 AAA ATPase complex, a protein dislocase complex that mediates the ATP-dependent extraction of the PEX5 receptor from peroxisomal membranes, an essential step for PEX5 recycling. Specifically recognizes PEX5 monoubiquitinated at 'Cys-6', and pulls it out of the peroxisome lumen through the PEX2-PEX10-PEX12 retrotranslocation channel. Extraction by the PEX1-PEX6 AAA ATPase complex is accompanied by unfolding of the TPR repeats and release of bound cargo from PEX5. The sequence is that of Peroxisomal ATPase PEX6 (pex-6) from Neurospora crassa (strain ATCC 24698 / 74-OR23-1A / CBS 708.71 / DSM 1257 / FGSC 987).